A 161-amino-acid chain; its full sequence is Small ribosomal subunit protein uS19 (161 aa).

The segment covering 1–19 (MARQKKYSGKGGARKKNKQ) has biased composition (basic residues). The disordered stretch occupies residues 1–26 (MARQKKYSGKGGARKKNKQKQSVAPR).

The protein belongs to the universal ribosomal protein uS19 family.

Functionally, protein S19 forms a complex with S13 that binds strongly to the 16S ribosomal RNA. This Methanococcus maripaludis (strain C7 / ATCC BAA-1331) protein is Small ribosomal subunit protein uS19.